Reading from the N-terminus, the 249-residue chain is Putative [LysW]-aminoadipate/[LysW]-glutamate kinase (249 aa).

Arginine 64 and asparagine 166 together coordinate substrate.

This sequence belongs to the acetylglutamate kinase family. LysZ subfamily.

It localises to the cytoplasm. It carries out the reaction [amino-group carrier protein]-C-terminal-N-(1,4-dicarboxybutan-1-yl)-L-glutamine + ATP = [amino-group carrier protein]-C-terminal-N-(1-carboxy-5-phosphooxy-5-oxopentan-1-yl)-L-glutamine + ADP. It catalyses the reaction [amino-group carrier protein]-C-terminal-gamma-(L-glutamyl)-L-glutamate + ATP = [amino-group carrier protein]-C-terminal-gamma-(5-phospho-L-glutamyl)-L-glutamate + ADP. It functions in the pathway amino-acid biosynthesis; L-lysine biosynthesis via AAA pathway; L-lysine from L-alpha-aminoadipate (Thermus route): step 2/5. It participates in amino-acid biosynthesis; L-arginine biosynthesis. Its function is as follows. Involved in both the arginine and lysine biosynthetic pathways. Phosphorylates the LysW-bound precursors glutamate (for arginine biosynthesis), respectively alpha-aminoadipate (for lysine biosynthesis). This is Putative [LysW]-aminoadipate/[LysW]-glutamate kinase from Pyrococcus horikoshii (strain ATCC 700860 / DSM 12428 / JCM 9974 / NBRC 100139 / OT-3).